The chain runs to 102 residues: MTGIPMEHGLLLAAALFCIGLCGLLIRRNLLYILMSIEIMMNASALAFVVAGSRWAQADGQIMYILVISLAAAEASIGLALLLLLYRRYHTLNVDTVSEMRG.

The next 3 membrane-spanning stretches (helical) occupy residues 6–26, 30–50, and 65–85; these read MEHG…GLLI, LLYI…AFVV, and ILVI…LLLL.

It belongs to the complex I subunit 4L family. NDH-1 is composed of 13 different subunits. Subunits NuoA, H, J, K, L, M, N constitute the membrane sector of the complex.

The protein localises to the cell inner membrane. The catalysed reaction is a quinone + NADH + 5 H(+)(in) = a quinol + NAD(+) + 4 H(+)(out). Functionally, NDH-1 shuttles electrons from NADH, via FMN and iron-sulfur (Fe-S) centers, to quinones in the respiratory chain. The immediate electron acceptor for the enzyme in this species is believed to be ubiquinone. Couples the redox reaction to proton translocation (for every two electrons transferred, four hydrogen ions are translocated across the cytoplasmic membrane), and thus conserves the redox energy in a proton gradient. The chain is NADH-quinone oxidoreductase subunit K from Shewanella oneidensis (strain ATCC 700550 / JCM 31522 / CIP 106686 / LMG 19005 / NCIMB 14063 / MR-1).